Reading from the N-terminus, the 111-residue chain is Phosphoribosyl-ATP pyrophosphatase (111 aa).

It belongs to the PRA-PH family.

Its subcellular location is the cytoplasm. The enzyme catalyses 1-(5-phospho-beta-D-ribosyl)-ATP + H2O = 1-(5-phospho-beta-D-ribosyl)-5'-AMP + diphosphate + H(+). The protein operates within amino-acid biosynthesis; L-histidine biosynthesis; L-histidine from 5-phospho-alpha-D-ribose 1-diphosphate: step 2/9. The polypeptide is Phosphoribosyl-ATP pyrophosphatase (Pseudomonas putida (strain ATCC 700007 / DSM 6899 / JCM 31910 / BCRC 17059 / LMG 24140 / F1)).